The chain runs to 486 residues: Cardiolipin synthase A (486 aa).

The next 2 membrane-spanning stretches (helical) occupy residues 3–23 and 38–58; these read TFYTVVSWLVILGYWVLIAGV and MAWLLIIYILPLVGIIAYLSV. PLD phosphodiesterase domains follow at residues 219 to 246 and 399 to 426; these read MDLRQHRKMVMIDNYIAYTGSMNMVDPR and EGGLLHTKSVLVDGELSLVGTVNLDMRS. Catalysis depends on residues histidine 224, lysine 226, aspartate 231, histidine 404, lysine 406, and aspartate 411.

This sequence belongs to the phospholipase D family. Cardiolipin synthase subfamily. ClsA sub-subfamily.

The protein resides in the cell inner membrane. It catalyses the reaction 2 a 1,2-diacyl-sn-glycero-3-phospho-(1'-sn-glycerol) = a cardiolipin + glycerol. Functionally, catalyzes the reversible phosphatidyl group transfer from one phosphatidylglycerol molecule to another to form cardiolipin (CL) (diphosphatidylglycerol) and glycerol. The sequence is that of Cardiolipin synthase A from Salmonella choleraesuis (strain SC-B67).